The sequence spans 787 residues: Endonuclease MutS2 (787 aa).

334–341 is a binding site for ATP; the sequence is GPNTGGKT. Residues 712–787 form the Smr domain; sequence LDLRGKRYEE…GNGATIVTFK (76 aa).

The protein belongs to the DNA mismatch repair MutS family. MutS2 subfamily. Homodimer. Binds to stalled ribosomes, contacting rRNA.

In terms of biological role, endonuclease that is involved in the suppression of homologous recombination and thus may have a key role in the control of bacterial genetic diversity. Its function is as follows. Acts as a ribosome collision sensor, splitting the ribosome into its 2 subunits. Detects stalled/collided 70S ribosomes which it binds and splits by an ATP-hydrolysis driven conformational change. Acts upstream of the ribosome quality control system (RQC), a ribosome-associated complex that mediates the extraction of incompletely synthesized nascent chains from stalled ribosomes and their subsequent degradation. Probably generates substrates for RQC. The polypeptide is Endonuclease MutS2 (Latilactobacillus sakei subsp. sakei (strain 23K) (Lactobacillus sakei subsp. sakei)).